Here is a 291-residue protein sequence, read N- to C-terminus: uncharacterized protein (291 aa).

The segment at 77–140 (TVPQSSPTAI…PPTPVVEKSP (64 aa)) is disordered. The span at 125–134 (PVTPAHPPTP) shows a compositional bias: pro residues.

This is an uncharacterized protein from Synechocystis sp. (strain ATCC 27184 / PCC 6803 / Kazusa).